Reading from the N-terminus, the 187-residue chain is Hypoxanthine/guanine phosphoribosyltransferase (187 aa).

It belongs to the purine/pyrimidine phosphoribosyltransferase family. Archaeal HPRT subfamily. As to quaternary structure, homodimer.

The protein resides in the cytoplasm. The enzyme catalyses IMP + diphosphate = hypoxanthine + 5-phospho-alpha-D-ribose 1-diphosphate. The catalysed reaction is GMP + diphosphate = guanine + 5-phospho-alpha-D-ribose 1-diphosphate. It participates in purine metabolism; IMP biosynthesis via salvage pathway; IMP from hypoxanthine: step 1/1. Its function is as follows. Catalyzes a salvage reaction resulting in the formation of IMP that is energically less costly than de novo synthesis. This chain is Hypoxanthine/guanine phosphoribosyltransferase, found in Ferroglobus placidus (strain DSM 10642 / AEDII12DO).